A 586-amino-acid chain; its full sequence is Arginine--tRNA ligase (586 aa).

The 'HIGH' region signature appears at 133-143; the sequence is ANPTGPLNIVS.

Belongs to the class-I aminoacyl-tRNA synthetase family. In terms of assembly, monomer.

It is found in the cytoplasm. The enzyme catalyses tRNA(Arg) + L-arginine + ATP = L-arginyl-tRNA(Arg) + AMP + diphosphate. The protein is Arginine--tRNA ligase of Leptospira borgpetersenii serovar Hardjo-bovis (strain JB197).